A 649-amino-acid polypeptide reads, in one-letter code: Solute carrier family 22 member 17 (649 aa).

Positions 1 to 70 are disordered; it reads MAPRVATGTP…GGDGLGSSLS (70 aa). The segment covering 24–34 has biased composition (polar residues); it reads VEITPTSNGQV. Residues 47–57 are compositionally biased toward basic and acidic residues; that stretch reads QGEREREREGE. N-linked (GlcNAc...) asparagine glycans are attached at residues asparagine 134 and asparagine 143. 11 helical membrane-spanning segments follow: residues 211-231, 240-260, 265-285, 300-320, 330-350, 414-433, 448-468, 477-497, 526-546, 557-577, and 584-604; these read VILE…FLGY, GIVL…AAAG, VMAL…GVYL, ALAG…LALV, MITA…FLES, NIWK…HAIR, FYLC…FLGV, GILL…LGLW, FSVL…LLAA, GLGL…AQRL, and FLQH…IMLL.

It belongs to the major facilitator (TC 2.A.1) superfamily. Organic cation transporter (TC 2.A.1.19) family. As to expression, expressed in brain.

It localises to the cell membrane. The protein resides in the vacuole membrane. Its function is as follows. Cell surface receptor for LCN2 (24p3) that plays a key role in iron homeostasis and transport. Able to bind iron-bound LCN2 (holo-24p3), followed by internalization of holo-24p3 and release of iron, thereby increasing intracellular iron concentration and leading to inhibition of apoptosis. Also binds iron-free LCN2 (apo-24p3), followed by internalization of apo-24p3 and its association with an intracellular siderophore, leading to iron chelation and iron transfer to the extracellular medium, thereby reducing intracellular iron concentration and resulting in apoptosis. This Homo sapiens (Human) protein is Solute carrier family 22 member 17 (SLC22A17).